The chain runs to 347 residues: Queuosine 5'-phosphate N-glycosylase/hydrolase (347 aa).

Queuine is bound by residues H53, F237, D239, D321, and D326. D239 acts as the Nucleophile or transition state stabilizer in catalysis.

It belongs to the QNG1 protein family.

The enzyme catalyses queuosine 5'-phosphate + H2O = queuine + D-ribose 5-phosphate. In terms of biological role, catalyzes the hydrolysis of queuosine 5'-phosphate, releasing the nucleobase queuine (q). Is required for salvage of queuine from exogenous queuosine (Q) that is imported and then converted to queuosine 5'-phosphate intracellularly. This is Queuosine 5'-phosphate N-glycosylase/hydrolase from Nematostella vectensis (Starlet sea anemone).